The sequence spans 2067 residues: Dedicator of cytokinesis protein 11 (2067 aa).

A PH domain is found at 162-269 (GVMKQGWLQK…WVNTIKQALL (108 aa)). The segment at 274-302 (DRRNGSETSEGSLDDDSSSQGKPESITES) is disordered. Polar residues predominate over residues 291-302 (SSQGKPESITES). The 178-residue stretch at 643–820 (NNHLYIYPQQ…PLFKVRAYVA (178 aa)) folds into the C2 DOCK-type domain. The disordered stretch occupies residues 1224–1267 (SSTIVDKEPSGSVTQNGLSRRGESRGSMYGDPGTPDINELHRRG). The DOCKER domain maps to 1614 to 2040 (RSYASTPELR…LSEIIHEQIF (427 aa)).

This sequence belongs to the DOCK family.

In terms of biological role, guanine nucleotide-exchange factor (GEF) that activates CDC42 by exchanging bound GDP for free GTP. The protein is Dedicator of cytokinesis protein 11 of Danio rerio (Zebrafish).